The sequence spans 801 residues: Phenylalanine--tRNA ligase beta subunit (801 aa).

In terms of domain architecture, tRNA-binding spans 39 to 152; it reads ARAFSGVVVG…TDAPIGTDIR (114 aa). Positions 407–482 constitute a B5 domain; sequence PARAPITLPI…RIYGYDNIPS (76 aa). Residues Asp460, Asp466, Glu469, and Glu470 each coordinate Mg(2+). One can recognise an FDX-ACB domain in the interval 706–799; it reads SKFPQVRRDI…LTVEHSAQLR (94 aa).

The protein belongs to the phenylalanyl-tRNA synthetase beta subunit family. Type 1 subfamily. In terms of assembly, tetramer of two alpha and two beta subunits. Requires Mg(2+) as cofactor.

The protein resides in the cytoplasm. The enzyme catalyses tRNA(Phe) + L-phenylalanine + ATP = L-phenylalanyl-tRNA(Phe) + AMP + diphosphate + H(+). The chain is Phenylalanine--tRNA ligase beta subunit from Psychrobacter arcticus (strain DSM 17307 / VKM B-2377 / 273-4).